The primary structure comprises 340 residues: Dihydroorotate dehydrogenase (quinone) (340 aa).

FMN contacts are provided by residues 61 to 65 and Thr85; that span reads AGLDK. Lys65 contributes to the substrate binding site. A substrate-binding site is contributed by 110-114; sequence NRMGF. FMN contacts are provided by Asn138 and Asn171. Asn171 contributes to the substrate binding site. The active-site Nucleophile is the Ser174. Asn176 is a substrate binding site. Residues Lys216 and Thr244 each contribute to the FMN site. Position 245–246 (245–246) interacts with substrate; sequence NT. Residues Gly267, Gly296, and 317-318 contribute to the FMN site; that span reads YS.

The protein belongs to the dihydroorotate dehydrogenase family. Type 2 subfamily. In terms of assembly, monomer. FMN is required as a cofactor.

The protein resides in the cell membrane. It carries out the reaction (S)-dihydroorotate + a quinone = orotate + a quinol. It functions in the pathway pyrimidine metabolism; UMP biosynthesis via de novo pathway; orotate from (S)-dihydroorotate (quinone route): step 1/1. Catalyzes the conversion of dihydroorotate to orotate with quinone as electron acceptor. In Ectopseudomonas mendocina (strain ymp) (Pseudomonas mendocina), this protein is Dihydroorotate dehydrogenase (quinone).